Reading from the N-terminus, the 515-residue chain is Arabinose import ATP-binding protein AraG 2 (515 aa).

The segment at 1-22 (MTMQTMTAASGHDAEAGTPPDG) is disordered. ABC transporter domains lie at 25 to 260 (LALD…MVGR) and 260 to 511 (RSIE…LIKL). 57–64 (GENGAGKS) contacts ATP.

This sequence belongs to the ABC transporter superfamily. Arabinose importer (TC 3.A.1.2.2) family. As to quaternary structure, the complex is composed of two ATP-binding proteins (AraG), two transmembrane proteins (AraH) and a solute-binding protein (AraF).

It localises to the cell inner membrane. It carries out the reaction L-arabinose(out) + ATP + H2O = L-arabinose(in) + ADP + phosphate + H(+). Its function is as follows. Part of the ABC transporter complex AraFGH involved in arabinose import. Responsible for energy coupling to the transport system. The chain is Arabinose import ATP-binding protein AraG 2 from Burkholderia cenocepacia (strain HI2424).